Here is a 146-residue protein sequence, read N- to C-terminus: D-aminoacyl-tRNA deacylase (146 aa).

The Gly-cisPro motif, important for rejection of L-amino acids signature appears at 138–139 (GP).

Belongs to the DTD family. Homodimer.

It is found in the cytoplasm. The enzyme catalyses glycyl-tRNA(Ala) + H2O = tRNA(Ala) + glycine + H(+). It carries out the reaction a D-aminoacyl-tRNA + H2O = a tRNA + a D-alpha-amino acid + H(+). An aminoacyl-tRNA editing enzyme that deacylates mischarged D-aminoacyl-tRNAs. Also deacylates mischarged glycyl-tRNA(Ala), protecting cells against glycine mischarging by AlaRS. Acts via tRNA-based rather than protein-based catalysis; rejects L-amino acids rather than detecting D-amino acids in the active site. By recycling D-aminoacyl-tRNA to D-amino acids and free tRNA molecules, this enzyme counteracts the toxicity associated with the formation of D-aminoacyl-tRNA entities in vivo and helps enforce protein L-homochirality. This is D-aminoacyl-tRNA deacylase from Xanthomonas oryzae pv. oryzae (strain MAFF 311018).